Consider the following 459-residue polypeptide: Trigger factor (459 aa).

One can recognise a PPIase FKBP-type domain in the interval 166-245 (GDFANIDLTA…VNSVKAEELP (80 aa)).

Belongs to the FKBP-type PPIase family. Tig subfamily.

It localises to the cytoplasm. The catalysed reaction is [protein]-peptidylproline (omega=180) = [protein]-peptidylproline (omega=0). In terms of biological role, involved in protein export. Acts as a chaperone by maintaining the newly synthesized protein in an open conformation. Functions as a peptidyl-prolyl cis-trans isomerase. In Bifidobacterium longum (strain DJO10A), this protein is Trigger factor.